The chain runs to 103 residues: Large ribosomal subunit protein bL21 (103 aa).

The protein belongs to the bacterial ribosomal protein bL21 family. Part of the 50S ribosomal subunit. Contacts protein L20.

This protein binds to 23S rRNA in the presence of protein L20. This is Large ribosomal subunit protein bL21 from Polynucleobacter asymbioticus (strain DSM 18221 / CIP 109841 / QLW-P1DMWA-1) (Polynucleobacter necessarius subsp. asymbioticus).